The sequence spans 243 residues: GTP cyclohydrolase 1 type 2 (243 aa).

Residues His-63, His-64, Asp-102, His-209, and Glu-213 each coordinate a divalent metal cation.

The protein belongs to the GTP cyclohydrolase I type 2/NIF3 family. As to quaternary structure, homohexamer.

It carries out the reaction GTP + H2O = 7,8-dihydroneopterin 3'-triphosphate + formate + H(+). The protein operates within cofactor biosynthesis; 7,8-dihydroneopterin triphosphate biosynthesis; 7,8-dihydroneopterin triphosphate from GTP: step 1/1. Converts GTP to dihydroneopterin triphosphate. This Helicobacter pylori (strain J99 / ATCC 700824) (Campylobacter pylori J99) protein is GTP cyclohydrolase 1 type 2.